We begin with the raw amino-acid sequence, 111 residues long: Large ribosomal subunit protein uL23 (111 aa).

This sequence belongs to the universal ribosomal protein uL23 family. In terms of assembly, part of the 50S ribosomal subunit. Contacts protein L29, and trigger factor when it is bound to the ribosome.

One of the early assembly proteins it binds 23S rRNA. One of the proteins that surrounds the polypeptide exit tunnel on the outside of the ribosome. Forms the main docking site for trigger factor binding to the ribosome. The chain is Large ribosomal subunit protein uL23 from Nitrosomonas europaea (strain ATCC 19718 / CIP 103999 / KCTC 2705 / NBRC 14298).